Consider the following 307-residue polypeptide: tRNA dimethylallyltransferase (307 aa).

An ATP-binding site is contributed by 9-16; that stretch reads GPTAVGKT. 11 to 16 is a substrate binding site; it reads TAVGKT. Residues 34 to 37 are interaction with substrate tRNA; sequence DSMQ.

Belongs to the IPP transferase family. In terms of assembly, monomer. It depends on Mg(2+) as a cofactor.

The catalysed reaction is adenosine(37) in tRNA + dimethylallyl diphosphate = N(6)-dimethylallyladenosine(37) in tRNA + diphosphate. Its function is as follows. Catalyzes the transfer of a dimethylallyl group onto the adenine at position 37 in tRNAs that read codons beginning with uridine, leading to the formation of N6-(dimethylallyl)adenosine (i(6)A). The polypeptide is tRNA dimethylallyltransferase (Limosilactobacillus fermentum (strain NBRC 3956 / LMG 18251) (Lactobacillus fermentum)).